A 342-amino-acid polypeptide reads, in one-letter code: AM-toxin biosynthesis protein 12 (342 aa).

Positions 1–20 (MSLLITSLAWGALLDPEVSS) are cleaved as a signal peptide.

It participates in mycotoxin biosynthesis. Part of the gene clusters that mediate the biosynthesis of AM-toxins, host-selective toxins (HSTs) causing Alternaria blotch on apple, a worldwide distributed disease. AM-toxins are cyclic depsipeptides containing the 3 residues 2-hydroxy-isovaleric acid (2-HIV), dehydroalanine, L-alanine which are common for all 3 AM-toxins I to III. The fourth precursor is L-alpha-amino-methoxyphenyl-valeric acid (L-Amv) for AM-toxin I, L-alpha-amino-phenyl-valeric acid (L-Apv) for AM-toxin II, and L-alpha-amino-hydroxyphenyl-valeric acid (L-Ahv) for AM-toxin III. AM-toxins have two target sites for affecting susceptible apple cells; they cause invagination of the plasma membrane and electrolyte loss and chloroplast disorganization. The non-ribosomal peptide synthetase AMT1 contains 4 catalytic modules and is responsible for activation of each residue in AM-toxin. The aldo-keto reductase AMT2 catalyzes the conversion of 2-keto-isovaleric acid (2-KIV) to 2-hydroxy-isovaleric acid (2-HIV), one of the precursor residues incorporated by AMT1 during AM-toxin biosynthesis, by reduction of its ketone to an alcohol. The cytochrome P450 monooxygenase AMT3 and the thioesterase AMT4 are also important for AM-toxin production, but their exact function within the AM-toxin biosynthesis are not known yet. Up to 21 proteins (including AMT1 to AMT4) are predicted to be involved in AM-toxin biosynthesis since their expression ishighly up-regulated in AM-toxin-producing cultures. In Alternaria alternata (Alternaria rot fungus), this protein is AM-toxin biosynthesis protein 12.